The sequence spans 83 residues: Bowman-Birk type proteinase inhibitor C-II (83 aa).

A propeptide spanning residues 1–7 is cleaved from the precursor; that stretch reads MELNLFK. 7 disulfide bridges follow: C21–C75, C22–C37, C25–C71, C27–C35, C45–C52, C49–C64, and C54–C62.

The protein belongs to the Bowman-Birk serine protease inhibitor family.

This chain is Bowman-Birk type proteinase inhibitor C-II, found in Glycine max (Soybean).